Consider the following 56-residue polypeptide: uncharacterized protein (56 aa).

Residues 15 to 56 (SIGNISSGNINNSIGNSSSSGCDDVFNNSTNNNNNNNNNNNK) are disordered.

This is an uncharacterized protein from Dictyostelium discoideum (Social amoeba).